The following is a 317-amino-acid chain: UV DNA damage endonuclease (317 aa).

This sequence belongs to the uve1/UvsE family.

Functionally, component in a DNA repair pathway. Removal of UV LIGHT damaged nucleotides. Recognizes pyrimidine dimers and cleave a phosphodiester bond immediately 5' to the lesion. The protein is UV DNA damage endonuclease of Bacillus thuringiensis subsp. konkukian (strain 97-27).